Reading from the N-terminus, the 307-residue chain is F-box protein PP2-B7 (307 aa).

The 47-residue stretch at 37–83 (PLSLGDLPEECISLIISFTSPRDACVFALVSKTFESAVQSDIVWEKF) folds into the F-box domain.

The polypeptide is F-box protein PP2-B7 (PP2B7) (Arabidopsis thaliana (Mouse-ear cress)).